The following is a 493-amino-acid chain: Protein nucleotidyltransferase YdiU (493 aa).

8 residues coordinate ATP: Gly-94, Gly-96, Arg-97, Lys-117, Asp-129, Gly-130, Arg-180, and Arg-187. Asp-256 (proton acceptor) is an active-site residue. Mg(2+) contacts are provided by Asn-257 and Asp-266. Asp-266 is an ATP binding site.

This sequence belongs to the SELO family. Requires Mg(2+) as cofactor. Mn(2+) serves as cofactor.

The enzyme catalyses L-seryl-[protein] + ATP = 3-O-(5'-adenylyl)-L-seryl-[protein] + diphosphate. It catalyses the reaction L-threonyl-[protein] + ATP = 3-O-(5'-adenylyl)-L-threonyl-[protein] + diphosphate. It carries out the reaction L-tyrosyl-[protein] + ATP = O-(5'-adenylyl)-L-tyrosyl-[protein] + diphosphate. The catalysed reaction is L-histidyl-[protein] + UTP = N(tele)-(5'-uridylyl)-L-histidyl-[protein] + diphosphate. The enzyme catalyses L-seryl-[protein] + UTP = O-(5'-uridylyl)-L-seryl-[protein] + diphosphate. It catalyses the reaction L-tyrosyl-[protein] + UTP = O-(5'-uridylyl)-L-tyrosyl-[protein] + diphosphate. Nucleotidyltransferase involved in the post-translational modification of proteins. It can catalyze the addition of adenosine monophosphate (AMP) or uridine monophosphate (UMP) to a protein, resulting in modifications known as AMPylation and UMPylation. The protein is Protein nucleotidyltransferase YdiU of Hahella chejuensis (strain KCTC 2396).